Reading from the N-terminus, the 120-residue chain is Ribosome-binding factor A (120 aa).

This sequence belongs to the RbfA family. In terms of assembly, monomer. Binds 30S ribosomal subunits, but not 50S ribosomal subunits or 70S ribosomes.

It localises to the cytoplasm. In terms of biological role, one of several proteins that assist in the late maturation steps of the functional core of the 30S ribosomal subunit. Associates with free 30S ribosomal subunits (but not with 30S subunits that are part of 70S ribosomes or polysomes). Required for efficient processing of 16S rRNA. May interact with the 5'-terminal helix region of 16S rRNA. This chain is Ribosome-binding factor A, found in Rickettsia felis (strain ATCC VR-1525 / URRWXCal2) (Rickettsia azadi).